The sequence spans 190 residues: Natural killer cells antigen CD94 (190 aa).

The Cytoplasmic portion of the chain corresponds to 1 to 10 (MAAFRTTAWR). A helical; Signal-anchor for type II membrane protein transmembrane segment spans residues 11–31 (LISGVLGVICLVLMAALGVLL). Topologically, residues 32–190 (KNSLTKRSVQ…FRYICKQQLI (159 aa)) are extracellular. 4 cysteine pairs are disulfide-bonded: Cys69-Cys81, Cys72-Cys83, Cys100-Cys185, and Cys163-Cys177. Residues 79–186 (YQCNCYFISN…CEKKFRYICK (108 aa)) enclose the C-type lectin domain. Residues Asn104 and Asn144 are each glycosylated (N-linked (GlcNAc...) asparagine).

Can form disulfide-bonded heterodimer with NKG2 family members KLRC1 and KLRC2. KLRD1-KLRC1 heterodimer interacts with peptide-bound MHC-E-B2M heterotrimeric complex. KLRD1 plays a prominent role in directly interacting with MHC-E. KLRD1-KLRC1 interacts with much higher affinity with peptide-bound MHC-E-B2M than KLRD1-KLRC2. Interacts with the adapter protein TYROBP/DAP12; this interaction is required for cell surface expression and cell activation.

It is found in the cell membrane. Functionally, immune receptor involved in self-nonself discrimination. In complex with KLRC1 or KLRC2 on cytotoxic and regulatory lymphocyte subsets, recognizes non-classical major histocompatibility (MHC) class Ib molecule MHC-E loaded with self-peptides derived from the signal sequence of classical MHC class Ia and non-classical MHC class Ib molecules. Enables cytotoxic cells to monitor the expression of MHC class I molecules in healthy cells and to tolerate self. Primarily functions as a ligand binding subunit as it lacks the capacity to signal. KLRD1-KLRC1 acts as an immune inhibitory receptor. Key inhibitory receptor on natural killer (NK) cells that regulates their activation and effector functions. Dominantly counteracts T cell receptor signaling on a subset of memory/effector CD8-positive T cells as part of an antigen-driven response to avoid autoimmunity. On intraepithelial CD8-positive gamma-delta regulatory T cells triggers TGFB1 secretion, which in turn limits the cytotoxic programming of intraepithelial CD8-positive alpha-beta T cells, distinguishing harmless from pathogenic antigens. In MHC-E-rich tumor microenvironment, acts as an immune inhibitory checkpoint and may contribute to progressive loss of effector functions of NK cells and tumor-specific T cells, a state known as cell exhaustion. Upon MHC-E-peptide binding, transmits intracellular signals through KLRC1 immunoreceptor tyrosine-based inhibition motifs (ITIMs) by recruiting INPP5D/SHIP-1 and INPPL1/SHIP-2 tyrosine phosphatases to ITIMs, and ultimately opposing signals transmitted by activating receptors through dephosphorylation of proximal signaling molecules. In terms of biological role, KLRD1-KLRC2 acts as an immune activating receptor. On cytotoxic lymphocyte subsets recognizes MHC-E loaded with signal sequence-derived peptides from non-classical MHC class Ib MHC-G molecules, likely playing a role in the generation and effector functions of adaptive NK cells and in maternal-fetal tolerance during pregnancy. Regulates the effector functions of terminally differentiated cytotoxic lymphocyte subsets, and in particular may play a role in adaptive NK cell response to viral infection. Upon MHC-E-peptide binding, transmits intracellular signals via the adapter protein TYROBP/DAP12, triggering the phosphorylation of proximal signaling molecules and cell activation. This is Natural killer cells antigen CD94 (KLRD1) from Bos taurus (Bovine).